Here is a 511-residue protein sequence, read N- to C-terminus: Cytochrome P450 26B1 (511 aa).

Cys-440 contacts heme.

The protein belongs to the cytochrome P450 family. Heme is required as a cofactor.

The protein localises to the endoplasmic reticulum membrane. It localises to the microsome membrane. It catalyses the reaction all-trans-retinoate + reduced [NADPH--hemoprotein reductase] + O2 = all-trans-4-hydroxyretinoate + oxidized [NADPH--hemoprotein reductase] + H2O + H(+). The enzyme catalyses all-trans-retinoate + reduced [NADPH--hemoprotein reductase] + O2 = all-trans-18-hydroxyretinoate + oxidized [NADPH--hemoprotein reductase] + H2O + H(+). A cytochrome P450 monooxygenase involved in the metabolism of retinoates (RAs), the active metabolites of vitamin A, and critical signaling molecules in animals. RAs exist as at least four different isomers: all-trans-RA (atRA), 9-cis-RA, 13-cis-RA, and 9,13-dicis-RA, where atRA is considered to be the biologically active isomer, although 9-cis-RA and 13-cis-RA also have activity. Catalyzes the hydroxylation of atRA primarily at C-4 and C-18, thereby contributing to the regulation of atRA homeostasis and signaling. Hydroxylation of atRA limits its biological activity and initiates a degradative process leading to its eventual elimination. Involved in the convertion of atRA to all-trans-4-oxo-RA. Can oxidize all-trans-13,14-dihydroretinoate (DRA) to metabolites which could include all-trans-4-oxo-DRA, all-trans-4-hydroxy-DRA, all-trans-5,8-epoxy-DRA, and all-trans-18-hydroxy-DRA. The sequence is that of Cytochrome P450 26B1 (cyp26b1) from Xenopus tropicalis (Western clawed frog).